Here is a 371-residue protein sequence, read N- to C-terminus: GPI mannosyltransferase 1 (371 aa).

The next 8 helical transmembrane spans lie at 64–84 (FPSW…WLMI), 120–140 (AILG…SVWL), 144–164 (ILGF…AFLV), 190–210 (IVVG…YLYG), 248–268 (ASSL…PLVF), 290–310 (VCTS…LPNS), 318–338 (LICL…AYNL), and 344–364 (SVFI…VYEL).

The protein belongs to the PIGM family.

The protein resides in the endoplasmic reticulum membrane. It participates in glycolipid biosynthesis; glycosylphosphatidylinositol-anchor biosynthesis. In terms of biological role, mannosyltransferase involved in glycosylphosphatidylinositol-anchor biosynthesis. Transfers the first alpha-1,4-mannose to GlcN-acyl-PI during GPI precursor assembly. Required for cell wall integrity. This is GPI mannosyltransferase 1 (gpi14) from Schizosaccharomyces pombe (strain 972 / ATCC 24843) (Fission yeast).